The following is a 414-amino-acid chain: 2,3-diketo-5-methylthiopentyl-1-phosphate enolase (414 aa).

Catalysis depends on lysine 99, which acts as the Proton acceptor. Substrate is bound by residues lysine 148, 174 to 177, histidine 265, glycine 338, and 360 to 361; these read KDDE and GG. 3 residues coordinate Mg(2+): lysine 174, aspartate 176, and glutamate 177. Residue lysine 174 is modified to N6-carboxylysine.

The protein belongs to the RuBisCO large chain family. Type IV subfamily. As to quaternary structure, homodimer. Mg(2+) serves as cofactor.

It catalyses the reaction 5-methylsulfanyl-2,3-dioxopentyl phosphate = 2-hydroxy-5-methylsulfanyl-3-oxopent-1-enyl phosphate. It functions in the pathway amino-acid biosynthesis; L-methionine biosynthesis via salvage pathway; L-methionine from S-methyl-5-thio-alpha-D-ribose 1-phosphate: step 3/6. Its function is as follows. Catalyzes the enolization of 2,3-diketo-5-methylthiopentyl-1-phosphate (DK-MTP-1-P) into 2-hydroxy-3-keto-5-methylthiopentenyl-1-phosphate (HK-MTPenyl-1-P). The polypeptide is 2,3-diketo-5-methylthiopentyl-1-phosphate enolase (Bacillus cytotoxicus (strain DSM 22905 / CIP 110041 / 391-98 / NVH 391-98)).